A 417-amino-acid polypeptide reads, in one-letter code: 4-hydroxy-3-methylbut-2-en-1-yl diphosphate synthase (flavodoxin) (417 aa).

[4Fe-4S] cluster is bound by residues Cys303, Cys306, Cys349, and Glu356.

This sequence belongs to the IspG family. [4Fe-4S] cluster serves as cofactor.

The catalysed reaction is (2E)-4-hydroxy-3-methylbut-2-enyl diphosphate + oxidized [flavodoxin] + H2O + 2 H(+) = 2-C-methyl-D-erythritol 2,4-cyclic diphosphate + reduced [flavodoxin]. The protein operates within isoprenoid biosynthesis; isopentenyl diphosphate biosynthesis via DXP pathway; isopentenyl diphosphate from 1-deoxy-D-xylulose 5-phosphate: step 5/6. In terms of biological role, converts 2C-methyl-D-erythritol 2,4-cyclodiphosphate (ME-2,4cPP) into 1-hydroxy-2-methyl-2-(E)-butenyl 4-diphosphate. The chain is 4-hydroxy-3-methylbut-2-en-1-yl diphosphate synthase (flavodoxin) from Mesorhizobium japonicum (strain LMG 29417 / CECT 9101 / MAFF 303099) (Mesorhizobium loti (strain MAFF 303099)).